The chain runs to 446 residues: Phosphoglucosamine mutase (446 aa).

The Phosphoserine intermediate role is filled by Ser-104. Mg(2+) contacts are provided by Ser-104, Asp-241, Asp-243, and Asp-245. Phosphoserine is present on Ser-104.

It belongs to the phosphohexose mutase family. The cofactor is Mg(2+). Activated by phosphorylation.

It catalyses the reaction alpha-D-glucosamine 1-phosphate = D-glucosamine 6-phosphate. Its function is as follows. Catalyzes the conversion of glucosamine-6-phosphate to glucosamine-1-phosphate. The polypeptide is Phosphoglucosamine mutase (Teredinibacter turnerae (strain ATCC 39867 / T7901)).